The chain runs to 554 residues: Rab GTPase-binding effector protein 2 (554 aa).

Low complexity predominate over residues 1-15 (MAAAPAALALDPQPQ). 3 disordered regions span residues 1–29 (MAAA…ELSR), 167–250 (IQRR…ETAS), and 375–395 (EQLP…DEAL). A coiled-coil region spans residues 15-173 (QEEQKDASES…IQEIQRRPRQ (159 aa)). A compositionally biased stretch (basic and acidic residues) spans 16-29 (EEQKDASESSELSR). Ser-176, Ser-180, Ser-187, and Ser-191 each carry phosphoserine. A coiled-coil region spans residues 274 to 512 (DSQWEQLQVE…LETSEQVQRD (239 aa)). Polar residues predominate over residues 377-386 (LPSSALQGSE).

Belongs to the rabaptin family. Heterodimer with RABGEF1. The dimer binds RAB5A that has been activated by GTP-binding. Interacts with SDCCAG8; this interaction is important for ciliogenesis regulation. Interacts with RAB4A; this interaction may mediate VEGFR2 cell surface expression.

It localises to the cytoplasm. It is found in the early endosome. The protein localises to the cytoskeleton. Its subcellular location is the microtubule organizing center. The protein resides in the centrosome. It localises to the cilium basal body. In terms of biological role, plays a role in membrane trafficking and in homotypic early endosome fusion. Participates in arteriogenesis by regulating vascular endothelial growth factor receptor 2/VEGFR2 cell surface expression and endosomal trafficking. By interacting with SDCCAG8, localizes to centrosomes and plays a critical role in ciliogenesis. The chain is Rab GTPase-binding effector protein 2 (Rabep2) from Rattus norvegicus (Rat).